Here is a 122-residue protein sequence, read N- to C-terminus: Large ribosomal subunit protein uL14 (122 aa).

This sequence belongs to the universal ribosomal protein uL14 family. As to quaternary structure, part of the 50S ribosomal subunit. Forms a cluster with proteins L3 and L19. In the 70S ribosome, L14 and L19 interact and together make contacts with the 16S rRNA in bridges B5 and B8. Interacts with ribosomal silencing factor RsfS, which may inhibit ribosomal subunit association.

In terms of biological role, binds to 23S rRNA. Forms part of two intersubunit bridges in the 70S ribosome. This Treponema pallidum (strain Nichols) protein is Large ribosomal subunit protein uL14.